The sequence spans 986 residues: LRR receptor-like serine/threonine-protein kinase ER2 (986 aa).

Positions 1 to 21 (MTTTTTTRLLLAAILLAVAAA) are cleaved as a signal peptide. Residues 22–581 (DDDGQTLLEI…VQRSSVSRSA (560 aa)) are Extracellular-facing. Asn64 and Asn73 each carry an N-linked (GlcNAc...) asparagine glycan. LRR repeat units follow at residues 68 to 89 (AVAALNLSGLNLGGEISPAIGN), 90 to 114 (LKSVESIDLKSNELSGQIPDEIGDC), 116 to 138 (SLKTLDLSSNNLGGDIPFSISKL), 139 to 161 (KHLENLILKNNQLVGMIPSTLSQ), 162 to 186 (LPNLKILDLAQNKLNGEIPRLIYWN), 188 to 210 (VLQYLGLRSNNLEGSLSPEMCQL), 211 to 233 (TGLWYFDVKNNSLTGIIPDTIGN), 234 to 259 (CTSFQVLDLSYNRLTGEIPFNIGFLQ), 261 to 280 (ATLSLQGNNFSGPIPSVIGL), 281 to 304 (MQALAVLDLSFNQLSGPIPSILGN), 306 to 329 (TYTEKLYLQGNRLTGSIPPELGNM), 330 to 352 (STLHYLELNDNQLTGFIPPELGK), 354 to 377 (TGLFDLNLANNNLEGPIPDNISSC), 379 to 401 (NLISFNAYGNKLNGTVPRSLHKL), 402 to 425 (ESITYLNLSSNYLSGAIPIELAKM), 427 to 449 (NLDTLDLSCNMVAGPIPSAIGSL), 450 to 472 (EHLLRLNFSNNNLVGYIPAEFGN), 473 to 498 (LRSIMEIDLSSNHLGGLIPQEVGMLQ), 500 to 520 (LILLKLESNNITGDVSSLINC), and 521 to 545 (FSLNVLNVSYNNLAGIVPTDNNFSR). Asn220 and Asn233 each carry an N-linked (GlcNAc...) asparagine glycan. 3 N-linked (GlcNAc...) asparagine glycosylation sites follow: Asn269, Asn304, and Asn328. N-linked (GlcNAc...) asparagine glycosylation is found at Asn373, Asn391, and Asn408. Residue Asn456 is glycosylated (N-linked (GlcNAc...) asparagine). Asn509, Asn527, and Asn542 each carry an N-linked (GlcNAc...) asparagine glycan. A helical transmembrane segment spans residues 582 to 602 (ILGIAVAGLVILLMILAAACW). The Cytoplasmic segment spans residues 603 to 986 (PHWAQVPKDV…FGEVISQNTE (384 aa)). The region spanning 653-934 (LSEKYIIGYG…YPDPPSKPAL (282 aa)) is the Protein kinase domain. ATP is bound by residues 659–667 (IGYGASSTV) and Lys681. The active-site Proton acceptor is Asp779.

This sequence belongs to the protein kinase superfamily. Ser/Thr protein kinase family.

Its subcellular location is the cell membrane. The catalysed reaction is L-seryl-[protein] + ATP = O-phospho-L-seryl-[protein] + ADP + H(+). It catalyses the reaction L-threonyl-[protein] + ATP = O-phospho-L-threonyl-[protein] + ADP + H(+). Functionally, receptor kinase that may be involved in the regulation of cell proliferation and cell growth. The sequence is that of LRR receptor-like serine/threonine-protein kinase ER2 from Oryza sativa subsp. japonica (Rice).